A 406-amino-acid chain; its full sequence is DNA-binding transcriptional repressor Mlc (406 aa).

Residues 33–42 constitute a DNA-binding region (H-T-H motif); sequence RIDLSRLAQL. Residues His-247, Cys-257, Cys-259, and Cys-264 each coordinate Zn(2+).

The protein belongs to the ROK (NagC/XylR) family. In terms of assembly, homodimer. Homotetramer. There is probably an equilibrium between the dimeric and the tetrameric form. Interacts with dephosphorylated PtsG. Mlc and PtsG EIIB domain form a complex with the 1:1 stoichiometry. Interacts with MtfA.

It localises to the cytoplasm. With respect to regulation, activity is modulated by glucose. In the presence of glucose, is inhibited by interaction with the dephosphorylated form of PtsG, which sequesters Mlc in the inner membrane and prevents Mlc binding to its target promoters. The restriction of conformational freedom resulting from the anchoring of four ends of Mlc to the membrane could be the primary cause of its loss of DNA-binding activity in vivo. Activity is also inhibited by interaction with the Mlc titration factor A (mtfA). The inactivation mechanisms of Mlc by dephosphorylated PtsG and MtfA differ significantly. In terms of biological role, global regulator of carbohydrate metabolism. Represses the expression of several genes involved in sugar transport and utilization, in particular phosphoenolpyruvate-carbohydrate phosphotransferase system (PTS) genes. Represses expression of ptsG (EIICB(Glc)), which encodes the PTS system glucose-specific EIICB component. Also represses the expression of the manXYZ operon, encoding the mannose-specific PTS system, expression of malT, encoding the transcriptional activator of the maltose regulon, and expression of the pts operon, composed of the genes ptsH, ptsI and crr. Represses its own expression. Acts by binding to the regulatory region of the target genes. In Escherichia coli (strain K12), this protein is DNA-binding transcriptional repressor Mlc.